The following is a 547-amino-acid chain: CAP-Gly domain-containing linker protein 3 (547 aa).

Positions 1 to 49 are disordered; the sequence is MTKTDPAPMAPPPRGEEEEEEEEDEPVPEAPSPTQERRQKPVVHPSAPA. Over residues 16–27 the composition is skewed to acidic residues; the sequence is EEEEEEEEDEPV. ANK repeat units lie at residues 117 to 158, 160 to 191, and 197 to 229; these read TDMT…LRSR, TNMN…VVNS, and NHGS…LRNR. Residues 314 to 356 enclose the CAP-Gly 1 domain; the sequence is GTTEFASGQWVGVELDEPEGKNDGSVGGVRYFICPPKQGLFAS. Positions 365–413 are disordered; sequence DAPPSSVTSTPRTPRMDFSRVTGKGRREHKGKKKSPSSPSLGSLQQREG. Residues 367–377 are compositionally biased toward low complexity; the sequence is PPSSVTSTPRT. Residue T374 is modified to Phosphothreonine. The span at 387 to 399 shows a compositional bias: basic residues; it reads GKGRREHKGKKKS. Phosphoserine occurs at positions 399 and 401. A CAP-Gly 2 domain is found at 436 to 478; it reads GKTDFAPGYWYGIELDQPTGKHDGSVFGVRYFTCAPRHGVFAP. The interval 488–547 is goLD; the sequence is STDPPGDSVGAKKVHQVTMTQPKRTFTTVRTPKDIASENSISRLLFCCWFPWMLRAEMQS. Residues C534 and C535 are each lipidated (S-palmitoyl cysteine).

As to quaternary structure, homodimer. Interacts with AKT1 and AKT2; when AKT1 and AKT2 are phosphorylated and activated, affinity is higher for AKT2. Interacts with ZDHHC13 (via ANK repeats). Interacts with ZDHHC17 (via ANK repeats). Palmitoylation by ZDHHC17 regulates association with the plasma membrane.

The protein localises to the cell membrane. The protein resides in the cytoplasm. It is found in the golgi apparatus. It localises to the golgi stack. Functionally, functions as a cytoplasmic linker protein. Involved in TGN-endosome dynamics. May modulate the cellular compartmentalization of AKT kinase family and promote its cell membrane localization, thereby playing a role in glucose transport in adipocytes. The sequence is that of CAP-Gly domain-containing linker protein 3 (Clip3) from Mus musculus (Mouse).